A 101-amino-acid chain; its full sequence is Cilia- and flagella-associated protein 141 (101 aa).

As to quaternary structure, microtubule inner protein component of sperm flagellar doublet microtubules. In terms of tissue distribution, expressed in trachea multiciliated cells.

The protein localises to the cytoplasm. It localises to the cytoskeleton. The protein resides in the cilium axoneme. It is found in the flagellum axoneme. In terms of biological role, microtubule inner protein (MIP) part of the dynein-decorated doublet microtubules (DMTs) in cilia axoneme, which is required for motile cilia beating. The protein is Cilia- and flagella-associated protein 141 of Bos taurus (Bovine).